The sequence spans 75 residues: Tautomerase PptA (75 aa).

Pro2 serves as the catalytic Proton acceptor; via imino nitrogen.

This sequence belongs to the 4-oxalocrotonate tautomerase family. PptA subfamily. As to quaternary structure, homodimer.

The protein resides in the cytoplasm. In Escherichia coli (strain SMS-3-5 / SECEC), this protein is Tautomerase PptA.